A 91-amino-acid polypeptide reads, in one-letter code: uncharacterized protein (91 aa).

This is an uncharacterized protein from Archaeoglobus fulgidus (strain ATCC 49558 / DSM 4304 / JCM 9628 / NBRC 100126 / VC-16).